The sequence spans 73 residues: Putative antimicrobial peptide clone 5 (73 aa).

An N-terminal signal peptide occupies residues 1-22 (MQIKHLITLFFLVLIGADQCSA). Positions 45 to 73 (EVSPQIDQYRNFQKREAELEELLDRLPMY) are excised as a propeptide.

It belongs to the non-disulfide-bridged peptide (NDBP) superfamily. Short antimicrobial peptide (group 4) family. Expressed by the venom gland.

The protein localises to the secreted. Functionally, antibacterial peptide. The polypeptide is Putative antimicrobial peptide clone 5 (Tityus costatus (Brazilian scorpion)).